The following is a 74-amino-acid chain: Sec-independent protein translocase protein TatA (74 aa).

A helical transmembrane segment spans residues 1–21 (MGTFSIWHWLIVLLVVVVVFG). The interval 50-74 (TAPAGQVANQSTADQTIDVQTKPKG) is disordered. Positions 56 to 68 (VANQSTADQTIDV) are enriched in polar residues.

The protein belongs to the TatA/E family. In terms of assembly, the Tat system comprises two distinct complexes: a TatABC complex, containing multiple copies of TatA, TatB and TatC subunits, and a separate TatA complex, containing only TatA subunits. Substrates initially bind to the TatABC complex, which probably triggers association of the separate TatA complex to form the active translocon.

Its subcellular location is the cell inner membrane. Functionally, part of the twin-arginine translocation (Tat) system that transports large folded proteins containing a characteristic twin-arginine motif in their signal peptide across membranes. TatA could form the protein-conducting channel of the Tat system. In Verminephrobacter eiseniae (strain EF01-2), this protein is Sec-independent protein translocase protein TatA.